Reading from the N-terminus, the 370-residue chain is Tyrosine-protein kinase transforming protein SEA (370 aa).

The Protein kinase domain occupies 60 to 323 (THRSRVIGRG…GLVCELERVL (264 aa)). ATP contacts are provided by residues 66-74 (IGRGHFGSV) and K92. The active-site Proton acceptor is D186. Y216 carries the phosphotyrosine; by autocatalysis modification. The disordered stretch occupies residues 345–370 (PPFPPAPRGQLPDSEDEEDEEEEVAE). Residues 357-370 (DSEDEEDEEEEVAE) show a composition bias toward acidic residues.

The protein belongs to the protein kinase superfamily. Tyr protein kinase family.

It carries out the reaction L-tyrosyl-[protein] + ATP = O-phospho-L-tyrosyl-[protein] + ADP + H(+). The chain is Tyrosine-protein kinase transforming protein SEA (V-SEA) from Galliformes.